Reading from the N-terminus, the 162-residue chain is UPF0254 protein MTH1148 homolog (162 aa).

This sequence belongs to the UPF0254 family.

The chain is UPF0254 protein MTH1148 homolog from Methanothermobacter thermautotrophicus (strain Winter) (Methanobacterium thermoautotrophicum).